The sequence spans 729 residues: MLYKGDTLYLNWLEDGIAELVFDAPGSVNKLDTATVASLGQALDVLEKQPELKGMLLRSNKAAFIVGADITEFLSLFLVPEEQLSQWLHFANSVFNRLEDLPVPTISAVNGYALGGGCECVLATDYRLATPDLRIGLPETRLGIMPGFGGSVRMPRMLGADSAMEIIAAGKDVGAEQAQKIGLVDGVVKPEKLVEGALAILRQAINGDLDWKAKRQPKLEPLKLSKIEATMSFTIAKGMVMQTAGKHYPAPITAVKTIEAAARLGRDEALKLENQSFVPLAHTNEARALVGIFLNDQFVKGKARQLTKNVETPKHAAVLGAGIMGGGIAYQSAWKGVPVVMKDISEKSLTLGMTEAAKLLNKQLERGKIDGLKLAGVISTIQPVLEYSGFDRVDVVVEAVVENPKVKKAVLAETEDKVRPETVLASNTSTIPISELASVLKRPENFCGMHFFNPVHRMPLVEVIRGEKTSDETIAKVVAWASKMGKTPIVVNDCPGFFVNRVLFPYFAGFSQLLRDGADFRKIDKVMEKQFGWPMGPAYLLDVVGIDTAHHAQAVMAAGFPQRMQKDYRDAIDALFDANRFGQKNGLGFWRYKENSKGKPKKEEDAVVDGLLADVSQPKRDFTDDEIIARMMIPMINEVVRCLEEGIIASPAEADMALVYGLGFPPFHGGAFRWLDTLGSARYLDMAQQYQHLGPLYEVPEGLRNKARHNEPYYPAVEPARPVGELKTA.

Residues 1-189 are enoyl-CoA hydratase/isomerase; it reads MLYKGDTLYL…KIGLVDGVVK (189 aa). Aspartate 296 serves as a coordination point for substrate. Residues 311-729 are 3-hydroxyacyl-CoA dehydrogenase; sequence ETPKHAAVLG…ARPVGELKTA (419 aa). Residues methionine 324, aspartate 343, 400–402, lysine 407, and serine 429 contribute to the NAD(+) site; that span reads VVE. Histidine 450 acts as the For 3-hydroxyacyl-CoA dehydrogenase activity in catalysis. Asparagine 453 is an NAD(+) binding site. Residues asparagine 500 and tyrosine 660 each coordinate substrate.

This sequence in the N-terminal section; belongs to the enoyl-CoA hydratase/isomerase family. The protein in the C-terminal section; belongs to the 3-hydroxyacyl-CoA dehydrogenase family. Heterotetramer of two alpha chains (FadB) and two beta chains (FadA).

The enzyme catalyses a (3S)-3-hydroxyacyl-CoA + NAD(+) = a 3-oxoacyl-CoA + NADH + H(+). It carries out the reaction a (3S)-3-hydroxyacyl-CoA = a (2E)-enoyl-CoA + H2O. The catalysed reaction is a 4-saturated-(3S)-3-hydroxyacyl-CoA = a (3E)-enoyl-CoA + H2O. It catalyses the reaction (3S)-3-hydroxybutanoyl-CoA = (3R)-3-hydroxybutanoyl-CoA. The enzyme catalyses a (3Z)-enoyl-CoA = a 4-saturated (2E)-enoyl-CoA. It carries out the reaction a (3E)-enoyl-CoA = a 4-saturated (2E)-enoyl-CoA. It functions in the pathway lipid metabolism; fatty acid beta-oxidation. In terms of biological role, involved in the aerobic and anaerobic degradation of long-chain fatty acids via beta-oxidation cycle. Catalyzes the formation of 3-oxoacyl-CoA from enoyl-CoA via L-3-hydroxyacyl-CoA. It can also use D-3-hydroxyacyl-CoA and cis-3-enoyl-CoA as substrate. This Enterobacter cloacae protein is Fatty acid oxidation complex subunit alpha.